We begin with the raw amino-acid sequence, 301 residues long: Putative phosphoenolpyruvate synthase regulatory protein (301 aa).

Low complexity predominate over residues 1–24; the sequence is MSEPVAPDGAQPAPAGATPQPLQP. Residues 1 to 27 are disordered; the sequence is MSEPVAPDGAQPAPAGATPQPLQPIAG. 181 to 188 is an ADP binding site; that stretch reads GVSRSGKT.

It belongs to the pyruvate, phosphate/water dikinase regulatory protein family. PSRP subfamily.

It carries out the reaction [pyruvate, water dikinase] + ADP = [pyruvate, water dikinase]-phosphate + AMP + H(+). It catalyses the reaction [pyruvate, water dikinase]-phosphate + phosphate + H(+) = [pyruvate, water dikinase] + diphosphate. Bifunctional serine/threonine kinase and phosphorylase involved in the regulation of the phosphoenolpyruvate synthase (PEPS) by catalyzing its phosphorylation/dephosphorylation. The chain is Putative phosphoenolpyruvate synthase regulatory protein from Cupriavidus pinatubonensis (strain JMP 134 / LMG 1197) (Cupriavidus necator (strain JMP 134)).